Here is a 117-residue protein sequence, read N- to C-terminus: MNTVRVTFLLVFVLAVSLGQADEDGNRMEMRQEIEKTEADSSYFAENLLLQKLEELEAKLWEETSEESRNSRQKRCAAEGIPCDPNPVKDLPCCSGLACLKPTLHGIWYKHHYCYTQ.

Positions 1–21 (MNTVRVTFLLVFVLAVSLGQA) are cleaved as a signal peptide. Positions 22 to 75 (DEDGNRMEMRQEIEKTEADSSYFAENLLLQKLEELEAKLWEETSEESRNSRQKR) are excised as a propeptide. 3 disulfides stabilise this stretch: C76/C94, C83/C99, and C93/C114.

The protein belongs to the neurotoxin 14 (magi-1) family. 01 (HNTX-16) subfamily. As to expression, expressed by the venom gland.

It localises to the secreted. Probable ion channel inhibitor. The protein is U9-theraphotoxin-Hhn1a of Cyriopagopus hainanus (Chinese bird spider).